The sequence spans 440 residues: Xylose isomerase (440 aa).

Residues Asp307 and Asp309 each coordinate Mg(2+).

Belongs to the xylose isomerase family. In terms of assembly, homotetramer. It depends on Mg(2+) as a cofactor.

It is found in the cytoplasm. The enzyme catalyses alpha-D-xylose = alpha-D-xylulofuranose. This Pectobacterium carotovorum subsp. carotovorum (strain PC1) protein is Xylose isomerase.